Consider the following 623-residue polypeptide: Leucine aminopeptidase 2 (623 aa).

A peptide is bound by residues 136–138 (QCQ) and 273–278 (PYGGME). Zn(2+) is bound at residue H302. The active-site Proton acceptor is E303. Zn(2+)-binding residues include H306 and E325. Y390 serves as the catalytic Proton donor.

It belongs to the peptidase M1 family. Requires Zn(2+) as cofactor.

The protein localises to the cytoplasm. It localises to the nucleus. The catalysed reaction is an epoxide + H2O = an ethanediol. In terms of biological role, aminopeptidase that preferentially cleaves di- and tripeptides. Also has low epoxide hydrolase activity (in vitro). Can hydrolyze the epoxide leukotriene LTA(4) but it forms preferentially 5,6-dihydroxy-7,9,11,14-eicosatetraenoic acid rather than the cytokine leukotriene B(4) as the product compared to the homologous mammalian enzyme (in vitro). The protein is Leucine aminopeptidase 2 of Phaeosphaeria nodorum (strain SN15 / ATCC MYA-4574 / FGSC 10173) (Glume blotch fungus).